The sequence spans 400 residues: Serine/threonine-protein kinase AFC3 (400 aa).

The segment at 1 to 29 (MIANGFESMDKERVRKRPRMTWDEAPAEP) is disordered. The Protein kinase domain occupies 71-396 (YKILSKMGEG…ANEALDHPFF (326 aa)). Residues 77-85 (MGEGTFGRV) and Lys-100 each bind ATP. Asp-196 (proton acceptor) is an active-site residue.

This sequence belongs to the protein kinase superfamily. CMGC Ser/Thr protein kinase family. Lammer subfamily.

The catalysed reaction is L-seryl-[protein] + ATP = O-phospho-L-seryl-[protein] + ADP + H(+). It catalyses the reaction L-threonyl-[protein] + ATP = O-phospho-L-threonyl-[protein] + ADP + H(+). The enzyme catalyses L-tyrosyl-[protein] + ATP = O-phospho-L-tyrosyl-[protein] + ADP + H(+). The polypeptide is Serine/threonine-protein kinase AFC3 (AFC3) (Arabidopsis thaliana (Mouse-ear cress)).